The sequence spans 70 residues: Large ribosomal subunit protein bL31 (70 aa).

Zn(2+)-binding residues include Cys16, Cys18, Cys37, and Cys40.

It belongs to the bacterial ribosomal protein bL31 family. Type A subfamily. As to quaternary structure, part of the 50S ribosomal subunit. The cofactor is Zn(2+).

Its function is as follows. Binds the 23S rRNA. This chain is Large ribosomal subunit protein bL31, found in Shewanella sediminis (strain HAW-EB3).